A 215-amino-acid polypeptide reads, in one-letter code: Orotate phosphoribosyltransferase (215 aa).

Lys-26 contributes to the 5-phospho-alpha-D-ribose 1-diphosphate binding site. 34–35 (FF) provides a ligand contact to orotate. 5-phospho-alpha-D-ribose 1-diphosphate is bound by residues 72–73 (YK), Arg-99, Lys-100, Lys-103, His-105, and 124–132 (DDVITAGTA). Thr-128 and Arg-156 together coordinate orotate.

It belongs to the purine/pyrimidine phosphoribosyltransferase family. PyrE subfamily. Homodimer. Requires Mg(2+) as cofactor.

It catalyses the reaction orotidine 5'-phosphate + diphosphate = orotate + 5-phospho-alpha-D-ribose 1-diphosphate. Its pathway is pyrimidine metabolism; UMP biosynthesis via de novo pathway; UMP from orotate: step 1/2. Functionally, catalyzes the transfer of a ribosyl phosphate group from 5-phosphoribose 1-diphosphate to orotate, leading to the formation of orotidine monophosphate (OMP). This chain is Orotate phosphoribosyltransferase, found in Shewanella oneidensis (strain ATCC 700550 / JCM 31522 / CIP 106686 / LMG 19005 / NCIMB 14063 / MR-1).